A 145-amino-acid polypeptide reads, in one-letter code: Large ribosomal subunit protein uL15 (145 aa).

Residues 1–54 (MKLNELKYTPGSKKEATRVGRGMASGKGKTATRGHKGQNSRSGGGVRPGFEGGQ) are disordered. The span at 42–52 (SGGGVRPGFEG) shows a compositional bias: gly residues.

The protein belongs to the universal ribosomal protein uL15 family. Part of the 50S ribosomal subunit.

Binds to the 23S rRNA. This chain is Large ribosomal subunit protein uL15, found in Mycoplasma capricolum subsp. capricolum (strain California kid / ATCC 27343 / NCTC 10154).